The sequence spans 256 residues: Fumarate reductase iron-sulfur subunit (256 aa).

The region spanning 7-97 is the 2Fe-2S ferredoxin-type domain; it reads MNVEVLRYNP…HMRIEPLANF (91 aa). Tyr-14 serves as a coordination point for a menaquinone. Cys-58, Cys-63, Cys-66, and Cys-78 together coordinate [2Fe-2S] cluster. One can recognise a 4Fe-4S ferredoxin-type domain in the interval 151-180; it reads LEKYRQFSMCINCGLCYAACPQFGLNPEFL. Cys-160, Cys-163, and Cys-166 together coordinate [4Fe-4S] cluster. [3Fe-4S] cluster-binding residues include Cys-170, Cys-216, and Cys-222. Residue Cys-226 coordinates [4Fe-4S] cluster. A menaquinone is bound at residue 237 to 240; that stretch reads NQGK.

The protein belongs to the succinate dehydrogenase/fumarate reductase iron-sulfur protein family. In terms of assembly, fumarate dehydrogenase forms part of an enzyme complex containing four subunits: a flavoprotein, an iron-sulfur, and two hydrophobic anchor proteins. [2Fe-2S] cluster serves as cofactor. It depends on [3Fe-4S] cluster as a cofactor. [4Fe-4S] cluster is required as a cofactor.

The protein localises to the cell inner membrane. It carries out the reaction a quinone + succinate = fumarate + a quinol. The enzyme catalyses a menaquinone + succinate = a menaquinol + fumarate. The polypeptide is Fumarate reductase iron-sulfur subunit (frdB) (Haemophilus influenzae (strain ATCC 51907 / DSM 11121 / KW20 / Rd)).